The primary structure comprises 242 residues: Pyr4-family terpene cyclase mfmH (242 aa).

4 consecutive transmembrane segments (helical) span residues 25–45 (VQDGLIICSGLCWTTAYILYI), 55–75 (GMPLVCLCANIAWEFLFGAAI), 80–100 (AQVVSFFPWFVIDIGIVYTTW), and 116–136 (NLGWILLGGIAGMLVMFWAFL). The N-linked (GlcNAc...) asparagine glycan is linked to asparagine 170. The next 2 membrane-spanning stretches (helical) occupy residues 175 to 195 (SWGIWFTRWIGSVFAELIFVW) and 211 to 231 (VTIFLFIVTEVADLTYPFVYA).

Belongs to the paxB family.

It localises to the membrane. It functions in the pathway secondary metabolite biosynthesis; terpenoid biosynthesis. Terpene cyclase; part of the gene cluster that mediates the biosynthesis of the phthalide-terpenoid hybrid 11'-O-desmethylfendlerol. Within the pathway, mfmH catalyzes the last step and cyclizes the prenyl unit of 5-O-farnesylcyclopolic acid into a drimane-like structure to yield 11'-O-desmethylfendlerol. The biosynthesis of 11'-O-desmethylfendlerol begins with the NR-PKS mfmB that forms 3,5-dimethylorsellinic acid (DMOA), which is then transformed into the phthalide 5,7-dihydroxy-4-(hydroxymethyl)-6-methylphthalide by the cytochrome P450 monooxygenase mfmA and the hydrolase mfmC. Subsequently, the methyltransferase mfmE catalyzes 7-O-methylation to yield 5-hydroxy-4-(hydroxymethyl)-7-methoxy-6-methylphthalide, which undergoes C-3 hydroxylation by the cytochrome P450 monooxygenase mfmF. The resultant cyclopolic acid (2,5-dihydroxy-4-(hydroxymethyl)-7-methoxy-6-methylphthalide) is then farnesylated by the DMATS-type prenyltransferase mfmD to afford 5-O-farnesylcyclopolic acid. Finally, the Pyr4-family terpene cyclase mfmH cyclizes the farnesyl moiety of 5-O-farnesylcyclopolic acid into a drimane-like structure, thus completing the biosynthesis of 11'-O-desmethylfendlerol. This is Pyr4-family terpene cyclase mfmH from Annulohypoxylon moriforme (Filamentous fungus).